The primary structure comprises 510 residues: Thermostable carboxypeptidase 1 (510 aa).

Positions 3 to 506 constitute a Peptidase M32 domain; sequence PEAAYQNLLE…FLAYLEKKYA (504 aa). The HPF signature appears at 245 to 247; it reads HPF. The DXRXT signature appears at 255-259; it reads DVRIT. His-276 is a Zn(2+) binding site. The short motif at 276 to 280 is the HEXXH element; that stretch reads HEMGH. The active-site Proton donor/acceptor is Glu-277. Positions 280 and 306 each coordinate Zn(2+). The short motif at 305–308 is the HES/GQ element; the sequence is HESQ. The I/NRXXA/SD motif lies at 357–362; the sequence is IRVEAD. The GXXQDXHW motif lies at 412 to 419; it reads GVMQDVHW.

Belongs to the peptidase M32 family. In terms of assembly, homodimer. Zn(2+) is required as a cofactor.

It catalyses the reaction Release of a C-terminal amino acid with broad specificity, except for -Pro.. In terms of biological role, broad specificity carboxypetidase that releases amino acids sequentially from the C-terminus, including neutral, aromatic, polar and basic residues, but not Pro. Has lower activity with substrates ending with Gly or Glu. The sequence is that of Thermostable carboxypeptidase 1 from Thermus thermophilus (strain ATCC 27634 / DSM 579 / HB8).